The primary structure comprises 295 residues: ATP synthase subunit a (295 aa).

The next 7 membrane-spanning stretches (helical) occupy residues 41–61 (KWSA…WLGF), 101–121 (YLTI…IPVA), 129–149 (IALP…VGIR), 161–181 (LVPA…IEFV), 191–211 (LAIR…VFAL), 222–242 (FVFG…ELMI), and 244–264 (VLQA…AISS).

Belongs to the ATPase A chain family. As to quaternary structure, F-type ATPases have 2 components, CF(1) - the catalytic core - and CF(0) - the membrane proton channel. CF(1) has five subunits: alpha(3), beta(3), gamma(1), delta(1), epsilon(1). CF(0) has three main subunits: a(1), b(2) and c(9-12). The alpha and beta chains form an alternating ring which encloses part of the gamma chain. CF(1) is attached to CF(0) by a central stalk formed by the gamma and epsilon chains, while a peripheral stalk is formed by the delta and b chains.

It is found in the cell membrane. Functionally, key component of the proton channel; it plays a direct role in the translocation of protons across the membrane. This Parafrankia sp. (strain EAN1pec) protein is ATP synthase subunit a.